A 522-amino-acid polypeptide reads, in one-letter code: Leucine-rich repeat transmembrane neuronal protein 1 (522 aa).

Positions methionine 1–alanine 34 are cleaved as a signal peptide. The 29-residue stretch at alanine 35–asparagine 63 folds into the LRRNT domain. The Extracellular segment spans residues alanine 35–lysine 427. Asparagine 56 and asparagine 63 each carry an N-linked (GlcNAc...) asparagine glycan. 10 LRR repeats span residues leucine 64 to glycine 87, methionine 89 to lysine 111, leucine 112 to proline 135, proline 137 to glycine 159, arginine 161 to aspartate 183, cysteine 184 to glycine 207, phenylalanine 209 to arginine 231, isoleucine 233 to valine 255, tryptophan 256 to threonine 278, and valine 279 to serine 302. The N-linked (GlcNAc...) asparagine glycan is linked to asparagine 130. The region spanning asparagine 314–aspartate 365 is the LRRCT domain. N-linked (GlcNAc...) asparagine glycosylation is present at asparagine 380. The segment at serine 382–glutamine 401 is disordered. The helical transmembrane segment at valine 428–valine 448 threads the bilayer. At serine 449–valine 522 the chain is on the cytoplasmic side.

The protein belongs to the LRRTM family. As to expression, predominantly expressed in forebrain regions including thalamus and cerebral cortex.

It localises to the cell membrane. The protein resides in the postsynaptic cell membrane. Exhibits strong synaptogenic activity, restricted to excitatory presynaptic differentiation, acting at both pre- and postsynaptic level. The sequence is that of Leucine-rich repeat transmembrane neuronal protein 1 (LRRTM1) from Homo sapiens (Human).